Reading from the N-terminus, the 729-residue chain is Phosphoribosylformylglycinamidine synthase subunit PurL (729 aa).

Residue His54 is part of the active site. Positions 57 and 96 each coordinate ATP. Mg(2+) is bound at residue Glu98. Residues 99–102 (SHNH) and Arg121 contribute to the substrate site. His100 serves as the catalytic Proton acceptor. Asp122 is a binding site for Mg(2+). Position 245 (Gln245) interacts with substrate. Asp273 contacts Mg(2+). Residue 317–319 (ETQ) participates in substrate binding. Residues Asp495 and Gly532 each coordinate ATP. Asn533 provides a ligand contact to Mg(2+). A substrate-binding site is contributed by Ser535.

The protein belongs to the FGAMS family. In terms of assembly, monomer. Part of the FGAM synthase complex composed of 1 PurL, 1 PurQ and 2 PurS subunits.

It is found in the cytoplasm. It carries out the reaction N(2)-formyl-N(1)-(5-phospho-beta-D-ribosyl)glycinamide + L-glutamine + ATP + H2O = 2-formamido-N(1)-(5-O-phospho-beta-D-ribosyl)acetamidine + L-glutamate + ADP + phosphate + H(+). The protein operates within purine metabolism; IMP biosynthesis via de novo pathway; 5-amino-1-(5-phospho-D-ribosyl)imidazole from N(2)-formyl-N(1)-(5-phospho-D-ribosyl)glycinamide: step 1/2. Functionally, part of the phosphoribosylformylglycinamidine synthase complex involved in the purines biosynthetic pathway. Catalyzes the ATP-dependent conversion of formylglycinamide ribonucleotide (FGAR) and glutamine to yield formylglycinamidine ribonucleotide (FGAM) and glutamate. The FGAM synthase complex is composed of three subunits. PurQ produces an ammonia molecule by converting glutamine to glutamate. PurL transfers the ammonia molecule to FGAR to form FGAM in an ATP-dependent manner. PurS interacts with PurQ and PurL and is thought to assist in the transfer of the ammonia molecule from PurQ to PurL. The sequence is that of Phosphoribosylformylglycinamidine synthase subunit PurL from Staphylococcus carnosus (strain TM300).